A 275-amino-acid chain; its full sequence is Diaminopimelate epimerase (275 aa).

Substrate contacts are provided by asparagine 12, glutamine 45, and asparagine 65. Cysteine 74 functions as the Proton donor in the catalytic mechanism. Residues 75–76 (GN), asparagine 158, asparagine 191, and 209–210 (ER) each bind substrate. Cysteine 218 (proton acceptor) is an active-site residue. 219–220 (GT) lines the substrate pocket.

The protein belongs to the diaminopimelate epimerase family. As to quaternary structure, homodimer.

Its subcellular location is the cytoplasm. The enzyme catalyses (2S,6S)-2,6-diaminopimelate = meso-2,6-diaminopimelate. It functions in the pathway amino-acid biosynthesis; L-lysine biosynthesis via DAP pathway; DL-2,6-diaminopimelate from LL-2,6-diaminopimelate: step 1/1. Functionally, catalyzes the stereoinversion of LL-2,6-diaminopimelate (L,L-DAP) to meso-diaminopimelate (meso-DAP), a precursor of L-lysine and an essential component of the bacterial peptidoglycan. This chain is Diaminopimelate epimerase, found in Shewanella frigidimarina (strain NCIMB 400).